A 650-amino-acid polypeptide reads, in one-letter code: MSSQSLYKVSGNIAANALVNNDQYKKMYQESIVNPEGFWREHGKRIDWIKPYTKIKKTTFDDHNLSINWFYDGTLNASANCLDRHLAEHSDRVAIIWEGDNASEQRQITYGELHTQVCKFANALRSQGVRRGDIVTIYMPMVPEAAVAMLACARIGAVHSVVFGGFSPDSIASRVIDGKSKVVITADEGMRGGRAIPLKRNIDDALKHPDVTSVEKVIVLKRTGGKVDWVEGRDVWWHSLVETASEHCAIEEMGAEDPLFLLYTSGSTGNPKGVLHTTGGYMVYASMTHEYVFDYKPGEIYWCTADVGWITGHSYMVYGPLANGATVLIHEGIPNYPSPARLGEMIDRHKVNILYTAPTLIRALMAEGKQHFDKYDGSSLRIMGSVGEPINPEAWRWYHEVIGHEHCPIVDTWWQTETGGILITPLPGATDTKPGSATRPFFGVQPALVDNMGNILEGATEGNLVLLDSWPGQMRTVYGDHERFVLTYFKTFRGMYFTGDGARRDEDGYYWITGRVDDVINVSGHRLGTAEVESALVSHELVAEAAVVGYPHDIKGQGIYAYVTLTRGTEESEELRQELRQWVRKEIGALATPDLIQWATGLPKTRSGKIMRRFLRKIAANEVTNLGDASTLADPAVIETLIETRLNRNE.

Residues 191-194 (RGGR), Thr311, and Asn335 each bind CoA. Residues 387-389 (GEP), 411-416 (DTWWQT), Asp500, and Arg515 contribute to the ATP site. Ser523 lines the CoA pocket. Arg526 contacts ATP. Residues Val537, His539, and Val542 each coordinate Mg(2+). Arg584 serves as a coordination point for CoA. Lys609 is modified (N6-acetyllysine).

Belongs to the ATP-dependent AMP-binding enzyme family. Mg(2+) serves as cofactor. Acetylated. Deacetylation by the SIR2-homolog deacetylase activates the enzyme.

The enzyme catalyses acetate + ATP + CoA = acetyl-CoA + AMP + diphosphate. In terms of biological role, catalyzes the conversion of acetate into acetyl-CoA (AcCoA), an essential intermediate at the junction of anabolic and catabolic pathways. AcsA undergoes a two-step reaction. In the first half reaction, AcsA combines acetate with ATP to form acetyl-adenylate (AcAMP) intermediate. In the second half reaction, it can then transfer the acetyl group from AcAMP to the sulfhydryl group of CoA, forming the product AcCoA. The sequence is that of Acetyl-coenzyme A synthetase from Shewanella sp. (strain ANA-3).